The primary structure comprises 206 residues: Dual specificity phosphatase 29 (206 aa).

One can recognise a Tyrosine-protein phosphatase domain in the interval histidine 47–glutamate 194. Histidine 138 to arginine 145 lines the substrate pocket. Catalysis depends on cysteine 139, which acts as the Phosphocysteine intermediate.

The protein belongs to the protein-tyrosine phosphatase family. Non-receptor class dual specificity subfamily.

The protein resides in the cytoplasm. It localises to the nucleus. It carries out the reaction O-phospho-L-tyrosyl-[protein] + H2O = L-tyrosyl-[protein] + phosphate. It catalyses the reaction O-phospho-L-seryl-[protein] + H2O = L-seryl-[protein] + phosphate. The catalysed reaction is O-phospho-L-threonyl-[protein] + H2O = L-threonyl-[protein] + phosphate. Dual specificity phosphatase able to dephosphorylate phosphotyrosine, phosphoserine and phosphothreonine residues within the same substrate, with a preference for phosphotyrosine as a substrate. Involved in the modulation of AMPK and MAPK1/2 signaling pathways. This Gasterosteus aculeatus (Three-spined stickleback) protein is Dual specificity phosphatase 29 (dusp29).